We begin with the raw amino-acid sequence, 272 residues long: Putative phosphoenolpyruvate synthase regulatory protein (272 aa).

152 to 159 contacts ADP; the sequence is GVSRCGKT.

The protein belongs to the pyruvate, phosphate/water dikinase regulatory protein family. PSRP subfamily.

It carries out the reaction [pyruvate, water dikinase] + ADP = [pyruvate, water dikinase]-phosphate + AMP + H(+). It catalyses the reaction [pyruvate, water dikinase]-phosphate + phosphate + H(+) = [pyruvate, water dikinase] + diphosphate. Bifunctional serine/threonine kinase and phosphorylase involved in the regulation of the phosphoenolpyruvate synthase (PEPS) by catalyzing its phosphorylation/dephosphorylation. The protein is Putative phosphoenolpyruvate synthase regulatory protein of Stutzerimonas stutzeri (strain A1501) (Pseudomonas stutzeri).